The primary structure comprises 142 residues: Large ribosomal subunit protein uL11 (142 aa).

This sequence belongs to the universal ribosomal protein uL11 family. As to quaternary structure, part of the ribosomal stalk of the 50S ribosomal subunit. Interacts with L10 and the large rRNA to form the base of the stalk. L10 forms an elongated spine to which L12 dimers bind in a sequential fashion forming a multimeric L10(L12)X complex. One or more lysine residues are methylated.

In terms of biological role, forms part of the ribosomal stalk which helps the ribosome interact with GTP-bound translation factors. The chain is Large ribosomal subunit protein uL11 from Shigella boydii serotype 4 (strain Sb227).